The following is a 266-amino-acid chain: Putative carbamate hydrolase RutD (266 aa).

It belongs to the AB hydrolase superfamily. Hydrolase RutD family.

It carries out the reaction carbamate + 2 H(+) = NH4(+) + CO2. Functionally, involved in pyrimidine catabolism. May facilitate the hydrolysis of carbamate, a reaction that can also occur spontaneously. The protein is Putative carbamate hydrolase RutD of Escherichia coli O45:K1 (strain S88 / ExPEC).